Consider the following 567-residue polypeptide: uncharacterized protein (567 aa).

A disordered region spans residues 1-26 (MPSEKATTRHLPGAVETLSPRTGRRP). 6 helical membrane-spanning segments follow: residues 57-77 (AILVTNVIGLIVGAMLLTVAF), 90-110 (VSFGIVPGYCVLAFILGTYWL), 142-162 (VALAVLFLWGAAAALWTIIYG), 173-193 (LFSMGVIGVVAATSCYLLTEF), 221-241 (MLVWLLCSGVPNVGVALTAIF), and 257-277 (VLILWAPLLIFGFILMWILAW). Positions 277 to 329 (WLTATPVRVVREALNRVEQGDLSGDLVVFDGTELGELQRGFNRMVEGLRERER) constitute an HAMP domain. Residues 361-485 (AVVFVDIVGS…EPVNEAARLC (125 aa)) form the Guanylate cyclase domain.

Belongs to the adenylyl cyclase class-3 family.

It is found in the cell membrane. This is an uncharacterized protein from Mycobacterium bovis (strain ATCC BAA-935 / AF2122/97).